The primary structure comprises 481 residues: Ribosomal protein uS12 methylthiotransferase RimO (481 aa).

An MTTase N-terminal domain is found at 8–124; it reads MTVHLVSMGC…IAGRLRTILD (117 aa). [4Fe-4S] cluster is bound by residues Cys17, Cys53, and Cys87. A disordered region spans residues 148 to 188; sequence PTARAEVSVPGHGTAPDLSASVTPDSGPRATRRRLGTGPSA. A Radical SAM core domain is found at 182 to 413; it reads LGTGPSAPLK…DLTDELVSQR (232 aa). [4Fe-4S] cluster is bound by residues Cys196, Cys200, and Cys203. Residues 415–480 enclose the TRAM domain; the sequence is EDRIGTRGRV…GVDLVARPAN (66 aa).

This sequence belongs to the methylthiotransferase family. RimO subfamily. [4Fe-4S] cluster is required as a cofactor.

It is found in the cytoplasm. The enzyme catalyses L-aspartate(89)-[ribosomal protein uS12]-hydrogen + (sulfur carrier)-SH + AH2 + 2 S-adenosyl-L-methionine = 3-methylsulfanyl-L-aspartate(89)-[ribosomal protein uS12]-hydrogen + (sulfur carrier)-H + 5'-deoxyadenosine + L-methionine + A + S-adenosyl-L-homocysteine + 2 H(+). In terms of biological role, catalyzes the methylthiolation of an aspartic acid residue of ribosomal protein uS12. In Cutibacterium acnes (strain DSM 16379 / KPA171202) (Propionibacterium acnes), this protein is Ribosomal protein uS12 methylthiotransferase RimO.